The sequence spans 290 residues: 4-hydroxybenzoate octaprenyltransferase (290 aa).

The next 8 helical transmembrane spans lie at 23-43 (IGTL…GKGV), 46-66 (LSIL…GCVV), 99-119 (LFVV…AMTI), 141-161 (LPQF…YAAV), 170-190 (WLLL…YAMV), 213-233 (LIVG…GYLT), 234-254 (QMSG…IHQQ), and 268-288 (AFMD…LSYW).

This sequence belongs to the UbiA prenyltransferase family. Requires Mg(2+) as cofactor.

The protein resides in the cell inner membrane. The catalysed reaction is all-trans-octaprenyl diphosphate + 4-hydroxybenzoate = 4-hydroxy-3-(all-trans-octaprenyl)benzoate + diphosphate. The protein operates within cofactor biosynthesis; ubiquinone biosynthesis. In terms of biological role, catalyzes the prenylation of para-hydroxybenzoate (PHB) with an all-trans polyprenyl group. Mediates the second step in the final reaction sequence of ubiquinone-8 (UQ-8) biosynthesis, which is the condensation of the polyisoprenoid side chain with PHB, generating the first membrane-bound Q intermediate 3-octaprenyl-4-hydroxybenzoate. This is 4-hydroxybenzoate octaprenyltransferase from Serratia proteamaculans (strain 568).